The following is a 199-amino-acid chain: Superoxide dismutase [Fe] (199 aa).

Residues His27, His74, Asp158, and His162 each contribute to the Fe cation site.

Belongs to the iron/manganese superoxide dismutase family. Homodimer. It depends on Fe cation as a cofactor.

The enzyme catalyses 2 superoxide + 2 H(+) = H2O2 + O2. In terms of biological role, destroys superoxide anion radicals which are normally produced within the cells and which are toxic to biological systems. In Babesia bovis, this protein is Superoxide dismutase [Fe] (SODB).